A 1342-amino-acid chain; its full sequence is DNA-directed RNA polymerase subunit beta (1342 aa).

It belongs to the RNA polymerase beta chain family. The RNAP catalytic core consists of 2 alpha, 1 beta, 1 beta' and 1 omega subunit. When a sigma factor is associated with the core the holoenzyme is formed, which can initiate transcription.

The enzyme catalyses RNA(n) + a ribonucleoside 5'-triphosphate = RNA(n+1) + diphosphate. In terms of biological role, DNA-dependent RNA polymerase catalyzes the transcription of DNA into RNA using the four ribonucleoside triphosphates as substrates. The chain is DNA-directed RNA polymerase subunit beta from Citrobacter koseri (strain ATCC BAA-895 / CDC 4225-83 / SGSC4696).